Consider the following 867-residue polypeptide: 2-methylcitrate dehydratase (2-methyl-trans-aconitate forming) (867 aa).

Residues C410, C476, and C479 each coordinate [4Fe-4S] cluster.

This sequence belongs to the aconitase/IPM isomerase family. [4Fe-4S] cluster is required as a cofactor.

The enzyme catalyses (2S,3S)-2-methylcitrate = 2-methyl-trans-aconitate + H2O. The catalysed reaction is citrate = D-threo-isocitrate. It functions in the pathway organic acid metabolism; propanoate degradation. Inhibited by ferricyanide and EDTA. In terms of biological role, involved in the catabolism of short chain fatty acids (SCFA) via the 2-methylcitrate cycle II (propionate degradation route). In vivo under anaerobic conditions, AcnD catalyzes the stereospecific dehydration of (2S,3S)-methylcitrate (2-MC) to yield the trans isomer of 2-methyl-aconitate (2-MCA). AcnD can also accept citrate and cis-aconitate, but with a lower efficiency. 2-methylisocitrate and isocitrate are not substrates. This Shewanella oneidensis (strain ATCC 700550 / JCM 31522 / CIP 106686 / LMG 19005 / NCIMB 14063 / MR-1) protein is 2-methylcitrate dehydratase (2-methyl-trans-aconitate forming) (acnD).